The chain runs to 451 residues: POC1 centriolar protein homolog B (451 aa).

WD repeat units follow at residues 16–55 (GHKAAITSLDLSPNGKQLATASWDTFLMLWNFKPHARAYR), 58–99 (GHKD…SEFK), 101–139 (HTAPVRSVDFSADGQFLATASEDKSIKVWSMYRQRFLYS), 142–181 (RHTHWVRCAKFSPDGRLIVSCSEDKTIKIWDTTNKQCVNN), 183–223 (SDSV…LLQH), 226–265 (VHSGGVNCISFHPSDNYLVTASSDGTLKILDLLEGRLIYT), and 268–307 (GHTGPVFTVSFSKGGELFASGGADTQVLLWRTNFDELHCK). At S321 the chain carries Phosphoserine. A disordered region spans residues 372 to 394 (PECSPTTTKKKTEDMSDLPSESQ). The stretch at 404-443 (ALEHIMEQLNVLTQTVSILEQRLTLTEDKLKDCLENQQKL) forms a coiled coil.

It belongs to the WD repeat POC1 family. As to quaternary structure, interacts with POC1A. Interacts with FAM161A. Interacts with CEP44; the interaction is direct and recruits POC1B to centriolar microtubules. Forms a microtubule-associated complex with POC5, CETN2 and FAM161A. Interacts with CCDC15. Post-translationally, phosphorylated in mitotic cells that may be mediated by CDK1.

Its subcellular location is the cytoplasm. It is found in the cytoskeleton. The protein localises to the microtubule organizing center. It localises to the centrosome. The protein resides in the centriole. Its subcellular location is the cilium basal body. It is found in the spindle pole. Plays an important role in centriole assembly and/or stability and ciliogenesis. Involved in early steps of centriole duplication, as well as in the later steps of centriole length control. Acts in concert with POC1A to ensure centriole integrity and proper mitotic spindle formation. Required for primary cilia formation, ciliary length and also cell proliferation. Required for retinal integrity. Acts as a positive regulator of centriole elongation. In Pongo abelii (Sumatran orangutan), this protein is POC1 centriolar protein homolog B (POC1B).